The sequence spans 303 residues: Light-independent protochlorophyllide reductase iron-sulfur ATP-binding protein (303 aa).

The interval 1–24 (MSSVLERPAAPAILPSRQDGEGSV) is disordered. ATP-binding positions include 47-52 (GIGKST) and Lys76. Position 51 (Ser51) interacts with Mg(2+). [4Fe-4S] cluster is bound by residues Cys132 and Cys166. ATP-binding positions include 217-218 (NR) and 241-243 (PDL).

The protein belongs to the NifH/BchL/ChlL family. As to quaternary structure, homodimer. Protochlorophyllide reductase is composed of three subunits; BchL, BchN and BchB. [4Fe-4S] cluster serves as cofactor.

The enzyme catalyses chlorophyllide a + oxidized 2[4Fe-4S]-[ferredoxin] + 2 ADP + 2 phosphate = protochlorophyllide a + reduced 2[4Fe-4S]-[ferredoxin] + 2 ATP + 2 H2O. It functions in the pathway porphyrin-containing compound metabolism; bacteriochlorophyll biosynthesis (light-independent). In terms of biological role, component of the dark-operative protochlorophyllide reductase (DPOR) that uses Mg-ATP and reduced ferredoxin to reduce ring D of protochlorophyllide (Pchlide) to form chlorophyllide a (Chlide). This reaction is light-independent. The L component serves as a unique electron donor to the NB-component of the complex, and binds Mg-ATP. This is Light-independent protochlorophyllide reductase iron-sulfur ATP-binding protein from Rhodospirillum centenum (strain ATCC 51521 / SW).